We begin with the raw amino-acid sequence, 145 residues long: Large ribosomal subunit protein uL13 (145 aa).

It belongs to the universal ribosomal protein uL13 family. Part of the 50S ribosomal subunit.

Functionally, this protein is one of the early assembly proteins of the 50S ribosomal subunit, although it is not seen to bind rRNA by itself. It is important during the early stages of 50S assembly. The chain is Large ribosomal subunit protein uL13 from Brevibacillus brevis (strain 47 / JCM 6285 / NBRC 100599).